A 160-amino-acid polypeptide reads, in one-letter code: Large ribosomal subunit protein uL22c (160 aa).

The protein belongs to the universal ribosomal protein uL22 family. In terms of assembly, part of the 50S ribosomal subunit.

The protein localises to the plastid. It is found in the chloroplast. Its function is as follows. This protein binds specifically to 23S rRNA. Functionally, the globular domain of the protein is located near the polypeptide exit tunnel on the outside of the subunit, while an extended beta-hairpin is found that lines the wall of the exit tunnel in the center of the 70S ribosome. This is Large ribosomal subunit protein uL22c (rpl22) from Olimarabidopsis pumila (Dwarf rocket).